The chain runs to 271 residues: Mannosyl-3-phosphoglycerate phosphatase (271 aa).

Aspartate 13 serves as the catalytic Nucleophile. Aspartate 13, aspartate 15, and aspartate 214 together coordinate Mg(2+).

This sequence belongs to the HAD-like hydrolase superfamily. MPGP family. It depends on Mg(2+) as a cofactor.

The protein resides in the cytoplasm. The catalysed reaction is 2-O-(alpha-D-mannosyl)-3-phosphoglycerate + H2O = (2R)-2-O-(alpha-D-mannosyl)-glycerate + phosphate. The polypeptide is Mannosyl-3-phosphoglycerate phosphatase (Escherichia coli O7:K1 (strain IAI39 / ExPEC)).